A 707-amino-acid chain; its full sequence is Complement C1r-A subcomponent (707 aa).

The first 16 residues, 1 to 16 (MWLFALLVTLFYGVEG), serve as a signal peptide directing secretion. Residues 17–140 (SIYLPQKLYG…KGFLAYYQAV (124 aa)) form the CUB 1 domain. E65, D73, and D118 together coordinate Ca(2+). Residues C70 and C88 are joined by a disulfide bond. N-linked (GlcNAc...) asparagine glycosylation occurs at N124. Residues D141, L142, and E144 each coordinate Ca(2+). The 49-residue stretch at 141–189 (DLDECASQPNSVEEGLQPRCQHLCHNYVGGYFCSCHPGYELQKDGQSCQ) folds into the EGF-like; calcium-binding domain. Cystine bridges form between C145–C164, C160–C173, C175–C188, and C192–C219. Ca(2+) contacts are provided by N166, Y167, and G170. N166 is subject to (3R)-3-hydroxyasparagine. The CUB 2 domain occupies 192–304 (CSSELYTEPS…RGWKLHYTTE (113 aa)). S205 bears the Phosphoserine; by CK2 mark. Residue N220 is glycosylated (N-linked (GlcNAc...) asparagine). Ca(2+) contacts are provided by D242, D252, D289, and D293. C249 and C267 are oxidised to a cystine. 2 Sushi domains span residues 306 to 372 (IKCP…RCKI) and 373 to 448 (KNCG…RCLP). Disulfide bonds link C308-C357, C337-C370, C375-C428, C405-C446, and C450-C579. The region spanning 463-704 (IIRGQPARPG…YVDWIKKEMG (242 aa)) is the Peptidase S1 domain. Catalysis depends on charge relay system residues H501 and D559. The N-linked (GlcNAc...) asparagine glycan is linked to N583. 2 disulfide bridges follow: C622/C641 and C652/C682. The active-site Charge relay system is S656.

This sequence belongs to the peptidase S1 family. In terms of assembly, core component of the complement C1 complex, a calcium-dependent complex composed of 1 molecule of the C1Q subcomplex, 2 molecules of C1R and 2 molecules of C1S. The C1Q subcomplex is composed 18 subunits: 3 chains of C1QA, C1QB, and C1QC trimerize to form 6 collagen-like triple helices connected to six globular ligand-recognition modules. Within the C1 complex, C1R is a dimer of identical chains, each of which is activated by cleavage into two chains, heavy and light, connected by disulfide bonds. Cleaved and activated by autocatalytic processing to generate Complement C1r subcomponent heavy and light chains that are connected by disulfide bonds. In terms of processing, the iron and 2-oxoglutarate dependent 3-hydroxylation of aspartate and asparagine is (R) stereospecific within EGF domains.

Its subcellular location is the secreted. It localises to the cell surface. The enzyme catalyses Selective cleavage of Lys(or Arg)-|-Ile bond in complement subcomponent C1s to form the active form of C1s (EC 3.4.21.42).. Activated by the C1Q subcomplex of the C1 complex following C1Q binding to immunoglobulins (IgG or IgM) complexed with antigens to form antigen-antibody complexes on the surface of pathogens. Immunoglobulin-binding promotes autoactivation of C1R, which results in the cleavage of the Arg-Ile bond in the catalytic domain. In terms of biological role, serine protease component of the complement C1 complex, a multiprotein complex that initiates the classical pathway of the complement system, a cascade of proteins that leads to phagocytosis and breakdown of pathogens and signaling that strengthens the adaptive immune system. C1R catalyzes the first enzymatic step in the classical complement pathway: it is activated by the C1Q subcomplex of the C1 complex, which associates with IgG or IgM immunoglobulins complexed with antigens to form antigen-antibody complexes on the surface of pathogens. Immunoglobulin-binding promotes the autocatalytic cleavage and activation of C1R. Activated C1R then cleaves and activates C1S, the second protease of the classical complement pathway. It is unclear if C1R activates C1S within single, strained C1 complexes or between neighboring C1 complexes on surfaces. This chain is Complement C1r-A subcomponent (C1ra), found in Mus musculus (Mouse).